The primary structure comprises 79 residues: Keratin-associated protein 21-1 (79 aa).

Interacts with hair keratins.

In terms of biological role, in the hair cortex, hair keratin intermediate filaments are embedded in an interfilamentous matrix, consisting of hair keratin-associated proteins (KRTAP), which are essential for the formation of a rigid and resistant hair shaft through their extensive disulfide bond cross-linking with abundant cysteine residues of hair keratins. The matrix proteins include the high-sulfur and high-glycine-tyrosine keratins. The polypeptide is Keratin-associated protein 21-1 (KRTAP21-1) (Homo sapiens (Human)).